The sequence spans 189 residues: Ribosome maturation factor RimM (189 aa).

Residues 118–189 form the PRC barrel domain; the sequence is SGEYYWDDLI…IILVDWDENF (72 aa).

It belongs to the RimM family. Binds ribosomal protein uS19.

It localises to the cytoplasm. An accessory protein needed during the final step in the assembly of 30S ribosomal subunit, possibly for assembly of the head region. Essential for efficient processing of 16S rRNA. May be needed both before and after RbfA during the maturation of 16S rRNA. It has affinity for free ribosomal 30S subunits but not for 70S ribosomes. This chain is Ribosome maturation factor RimM, found in Ruthia magnifica subsp. Calyptogena magnifica.